We begin with the raw amino-acid sequence, 86 residues long: Protein E7 (86 aa).

Residues 1–37 (MHGPHPTVKDIELSLAPEDIPVCNVQLDEEDYTDAVE) are E7 terminal domain. Residues 49 to 85 (CTKCSLPLRLVVECSHADIRALEQLLLGTLKLVCPRC) fold into a zinc finger. Positions 67–75 (IRALEQLLL) match the Nuclear export signal motif.

It belongs to the papillomaviridae E7 protein family. In terms of assembly, homodimer. Homooligomer. Interacts with host RB1; this interaction induces dissociation of RB1-E2F1 complex thereby disrupting RB1 activity. Interacts with host EP300; this interaction represses EP300 transcriptional activity. Interacts with protein E2; this interaction inhibits E7 oncogenic activity. Interacts with host TMEM173/STING; this interaction impairs the ability of TMEM173/STING to sense cytosolic DNA and promote the production of type I interferon (IFN-alpha and IFN-beta). Highly phosphorylated.

The protein localises to the host cytoplasm. The protein resides in the host nucleus. Its function is as follows. Plays a role in viral genome replication by driving entry of quiescent cells into the cell cycle. Stimulation of progression from G1 to S phase allows the virus to efficiently use the cellular DNA replicating machinery to achieve viral genome replication. E7 protein has both transforming and trans-activating activities. Induces the disassembly of the E2F1 transcription factor from RB1, with subsequent transcriptional activation of E2F1-regulated S-phase genes. Interferes with host histone deacetylation mediated by HDAC1 and HDAC2, leading to transcription activation. Also plays a role in the inhibition of both antiviral and antiproliferative functions of host interferon alpha. Interaction with host TMEM173/STING impairs the ability of TMEM173/STING to sense cytosolic DNA and promote the production of type I interferon (IFN-alpha and IFN-beta). In Homo sapiens (Human), this protein is Protein E7.